We begin with the raw amino-acid sequence, 465 residues long: UDP-N-acetylglucosamine 1-carboxyvinyltransferase (465 aa).

Position 22–23 (22–23) interacts with phosphoenolpyruvate; it reads KN. Arginine 94 serves as a coordination point for UDP-N-acetyl-alpha-D-glucosamine. The active-site Proton donor is the cysteine 119. Cysteine 119 bears the 2-(S-cysteinyl)pyruvic acid O-phosphothioketal mark. 2 residues coordinate UDP-N-acetyl-alpha-D-glucosamine: aspartate 313 and valine 335.

The protein belongs to the EPSP synthase family. MurA subfamily.

Its subcellular location is the cytoplasm. The enzyme catalyses phosphoenolpyruvate + UDP-N-acetyl-alpha-D-glucosamine = UDP-N-acetyl-3-O-(1-carboxyvinyl)-alpha-D-glucosamine + phosphate. It participates in cell wall biogenesis; peptidoglycan biosynthesis. In terms of biological role, cell wall formation. Adds enolpyruvyl to UDP-N-acetylglucosamine. The protein is UDP-N-acetylglucosamine 1-carboxyvinyltransferase of Protochlamydia amoebophila (strain UWE25).